Consider the following 255-residue polypeptide: uncharacterized protein (255 aa).

Positions 1–28 (MFKLNFKNNYKVLTLLFSLTLSMFVSNA) are cleaved as a signal peptide. 3 N-linked (GlcNAc...) asparagine glycosylation sites follow: N38, N61, and N83.

The protein resides in the secreted. This is an uncharacterized protein from Dictyostelium discoideum (Social amoeba).